A 487-amino-acid chain; its full sequence is Lysine--tRNA ligase (487 aa).

Mg(2+) is bound by residues E398 and E405.

The protein belongs to the class-II aminoacyl-tRNA synthetase family. Homodimer. Mg(2+) serves as cofactor.

The protein localises to the cytoplasm. The enzyme catalyses tRNA(Lys) + L-lysine + ATP = L-lysyl-tRNA(Lys) + AMP + diphosphate. This Mycoplasma mobile (strain ATCC 43663 / 163K / NCTC 11711) (Mesomycoplasma mobile) protein is Lysine--tRNA ligase.